The chain runs to 951 residues: Zinc fingers and homeoboxes protein 3 (951 aa).

A disordered region spans residues 1-66 (MASKRKSTTP…SSTDGSALAN (66 aa)). Residues 42-58 (PSEAPEASSEAAPNPSS) show a composition bias toward low complexity. 2 C2H2-type zinc fingers span residues 77–100 (YSCK…TSEH) and 109–132 (FVCT…AKCH). Residues 198-249 (KENAPTQPGGEALPKPLAGETEGKEGDHTFINGATPVSQASANSTKPPHTAN) form a disordered region. Positions 232–244 (TPVSQASANSTKP) are enriched in polar residues. The segment at 237 to 481 (ASANSTKPPH…LLTACPSITS (245 aa)) is required for homodimerization and interaction with NFYA. The tract at residues 297–495 (LSSIPTYNAA…DANIYKNKKS (199 aa)) is required for repressor activity. 2 consecutive DNA-binding regions (homeobox) follow at residues 298 to 357 (SSIP…GISW) and 487 to 546 (ANIY…RNLK). Residues 490-548 (YKNKKSHEQLSALKGSFCRNQFPGQSEVEHLTKVTGLSTREVRKWFSDRRYHCRNLKGT) form a required for nuclear localization region. A Phosphoserine modification is found at Ser597. The segment at residues 605–664 (TPTKYKERAPEQLRVLESSFAQNPLPPEEELDRLRSETKMTRREIDGWFSERRKRVNAEE) is a DNA-binding region (homeobox 3). Disordered regions lie at residues 621-642 (ESSF…RSET) and 661-702 (NAEE…NGSS). The span at 661–674 (NAEETKKADGHAPQ) shows a compositional bias: basic and acidic residues. Acidic residues predominate over residues 675-690 (EEAEGAEEEGRDEELA). 2 positions are modified to phosphoserine: Ser701 and Ser716. 2 consecutive DNA-binding regions (homeobox) follow at residues 759–818 (PSRV…KNGQ) and 830–889 (FPPG…TRAV). A disordered region spans residues 885-951 (ETRAVADTSS…PQSGRQLETD (67 aa)). 2 positions are modified to phosphoserine: Ser922 and Ser941. Residues 937–951 (FDTSSPQSGRQLETD) are compositionally biased toward polar residues.

The protein belongs to the ZHX family. As to quaternary structure, homodimer (via homeobox domain 1). Heterodimer with ZHX1 (via homeobox domain 1). Heterodimer with ZHX2 (via homeobox domain 1). Heterodimerization with ZHX1 is a prerequisite for repressor activity. Interacts with NFYA. In terms of tissue distribution, widely expressed.

Its subcellular location is the cytoplasm. The protein resides in the nucleus. Acts as a transcriptional repressor. Involved in the early stages of mesenchymal stem cell (MSC) osteogenic differentiation. Is a regulator of podocyte gene expression during primary glomerula disease. Binds to promoter DNA. In Rattus norvegicus (Rat), this protein is Zinc fingers and homeoboxes protein 3 (Zhx3).